We begin with the raw amino-acid sequence, 545 residues long: Glucose-6-phosphate isomerase (545 aa).

Glutamate 351 acts as the Proton donor in catalysis. Residues histidine 382 and lysine 510 contribute to the active site.

The protein belongs to the GPI family.

Its subcellular location is the cytoplasm. It carries out the reaction alpha-D-glucose 6-phosphate = beta-D-fructose 6-phosphate. It participates in carbohydrate biosynthesis; gluconeogenesis. Its pathway is carbohydrate degradation; glycolysis; D-glyceraldehyde 3-phosphate and glycerone phosphate from D-glucose: step 2/4. In terms of biological role, catalyzes the reversible isomerization of glucose-6-phosphate to fructose-6-phosphate. The protein is Glucose-6-phosphate isomerase of Shewanella sp. (strain MR-4).